Here is a 148-residue protein sequence, read N- to C-terminus: uncharacterized protein (148 aa).

This is an uncharacterized protein from Bacillus subtilis (Bacteriophage SP01).